The sequence spans 227 residues: Aspartyl protease inhibitor (227 aa).

Residues 1-15 (MKLVVLCVLCGIALA) form the signal peptide. Positions 88 to 109 (SLKSRMAGKKEKAVTPKEEDLP) are enriched in basic and acidic residues. The segment at 88–116 (SLKSRMAGKKEKAVTPKEEDLPKAPQKPS) is disordered. Cys-131 and Cys-223 are disulfide-bonded.

Belongs to the protease inhibitor I33 family.

It localises to the secreted. In terms of biological role, aspartyl protease inhibitor. This is Aspartyl protease inhibitor (API) from Ostertagia ostertagi (Brown stomach worm).